The primary structure comprises 214 residues: Riboflavin kinase (214 aa).

The interval Met1–Ser26 is disordered. Residues Thr44 and Asn46 each coordinate Mg(2+). The active-site Nucleophile is Glu112.

It belongs to the flavokinase family. Zn(2+) serves as cofactor. Mg(2+) is required as a cofactor.

The catalysed reaction is riboflavin + ATP = FMN + ADP + H(+). It functions in the pathway cofactor biosynthesis; FMN biosynthesis; FMN from riboflavin (ATP route): step 1/1. In terms of biological role, catalyzes the phosphorylation of riboflavin (vitamin B2) to form flavin mononucleotide (FMN) coenzyme. The protein is Riboflavin kinase (fmn1) of Aspergillus clavatus (strain ATCC 1007 / CBS 513.65 / DSM 816 / NCTC 3887 / NRRL 1 / QM 1276 / 107).